The following is a 144-amino-acid chain: Putative pre-16S rRNA nuclease (144 aa).

This sequence belongs to the YqgF nuclease family.

Its subcellular location is the cytoplasm. Its function is as follows. Could be a nuclease involved in processing of the 5'-end of pre-16S rRNA. This chain is Putative pre-16S rRNA nuclease, found in Lacticaseibacillus casei (strain BL23) (Lactobacillus casei).